The chain runs to 217 residues: Somatotropin (217 aa).

The signal sequence occupies residues 1 to 26 (MATGSRTSLLLAFGLLCLPWLQEGSA). His-44 is a binding site for Zn(2+). The cysteines at positions 79 and 191 are disulfide-linked. A Phosphoserine modification is found at Ser-132. A Deamidated glutamine; by deterioration modification is found at Gln-163. Ser-176 bears the Phosphoserine mark. Position 178 is a deamidated asparagine; by deterioration (Asn-178). Glu-200 serves as a coordination point for Zn(2+). A disulfide bridge connects residues Cys-208 and Cys-215.

It belongs to the somatotropin/prolactin family. As to quaternary structure, monomer, dimer, trimer, tetramer and pentamer, disulfide-linked or non-covalently associated, in homomeric and heteromeric combinations. Can also form a complex either with GHBP or with the alpha2-macroglobulin complex.

It localises to the secreted. Its function is as follows. Plays an important role in growth control. Its major role in stimulating body growth is to stimulate the liver and other tissues to secrete IGF1. It stimulates both the differentiation and proliferation of myoblasts. It also stimulates amino acid uptake and protein synthesis in muscle and other tissues. The chain is Somatotropin (GH1) from Homo sapiens (Human).